Here is a 598-residue protein sequence, read N- to C-terminus: DNA mismatch repair protein MutL (598 aa).

Belongs to the DNA mismatch repair MutL/HexB family.

In terms of biological role, this protein is involved in the repair of mismatches in DNA. It is required for dam-dependent methyl-directed DNA mismatch repair. May act as a 'molecular matchmaker', a protein that promotes the formation of a stable complex between two or more DNA-binding proteins in an ATP-dependent manner without itself being part of a final effector complex. This Thiobacillus denitrificans (strain ATCC 25259 / T1) protein is DNA mismatch repair protein MutL.